The following is a 100-amino-acid chain: uncharacterized protein (100 aa).

3 consecutive transmembrane segments (helical) span residues 9-29 (VYTY…SWVV), 41-61 (PYLI…ITAP), and 72-92 (SIPF…FLGI).

Its subcellular location is the membrane. This is an uncharacterized protein from Saccharomyces cerevisiae (strain ATCC 204508 / S288c) (Baker's yeast).